Reading from the N-terminus, the 86-residue chain is U22-theraphotoxin-Cg1a (86 aa).

The first 20 residues, 1 to 20 (MKVSVVLAITVLALLSVAYA), serve as a signal peptide directing secretion. The propeptide occupies 21 to 51 (SEFEEKELVKEVVRTIFLGKEDAALREETDR). 3 cysteine pairs are disulfide-bonded: Cys53–Cys67, Cys60–Cys72, and Cys66–Cys79. The residue at position 85 (Phe85) is a Phenylalanine amide.

Belongs to the neurotoxin 10 (Hwtx-1) family. 42 (Jztx-44) subfamily. Expressed by the venom gland.

The protein localises to the secreted. Its function is as follows. Probable ion channel inhibitor. In Chilobrachys guangxiensis (Chinese earth tiger tarantula), this protein is U22-theraphotoxin-Cg1a.